A 179-amino-acid chain; its full sequence is Large ribosomal subunit protein uL5 (179 aa).

Belongs to the universal ribosomal protein uL5 family. Part of the 50S ribosomal subunit; part of the 5S rRNA/L5/L18/L25 subcomplex. Contacts the 5S rRNA and the P site tRNA. Forms a bridge to the 30S subunit in the 70S ribosome.

In terms of biological role, this is one of the proteins that bind and probably mediate the attachment of the 5S RNA into the large ribosomal subunit, where it forms part of the central protuberance. In the 70S ribosome it contacts protein S13 of the 30S subunit (bridge B1b), connecting the 2 subunits; this bridge is implicated in subunit movement. Contacts the P site tRNA; the 5S rRNA and some of its associated proteins might help stabilize positioning of ribosome-bound tRNAs. In Francisella tularensis subsp. tularensis (strain SCHU S4 / Schu 4), this protein is Large ribosomal subunit protein uL5.